The sequence spans 330 residues: Exostosin-like 2 (330 aa).

The Cytoplasmic portion of the chain corresponds to 1-21 (MMRGCHICKLPGRVMGIRVLR). Residues 22–42 (FSLVVILVLLLVAGALTNLLP) traverse the membrane as a helical; Signal-anchor for type II membrane protein segment. Topologically, residues 43-330 (NIKEDKMLTL…FPYANHKSKM (288 aa)) are lumenal. Residue Gln-72 participates in UDP-N-acetyl-alpha-D-galactosamine binding. Gln-72 contacts UDP-N-acetyl-alpha-D-glucosamine. A glycan (N-linked (GlcNAc...) asparagine) is linked at Asn-75. Residues Arg-76, Asn-101, Asn-130, Arg-135, Asp-151, Asp-152, Asp-153, and Asp-245 each coordinate UDP-N-acetyl-alpha-D-galactosamine. Residues Arg-76, Asn-101, Asn-130, Arg-135, Asp-151, Asp-152, Asp-153, Asp-245, Asp-246, and Arg-293 each coordinate UDP-N-acetyl-alpha-D-glucosamine. Residue Asp-153 participates in Mn(2+) binding. A disulfide bond links Cys-244 and Cys-296. Asp-246 is a catalytic residue. A UDP-N-acetyl-alpha-D-galactosamine-binding site is contributed by Arg-293.

The protein belongs to the glycosyltransferase 47 family. The cofactor is Mn(2+).

It localises to the endoplasmic reticulum membrane. The enzyme catalyses 3-O-(beta-D-GlcA-(1-&gt;3)-beta-D-Gal-(1-&gt;3)-beta-D-Gal-(1-&gt;4)-beta-D-Xyl)-L-seryl-[protein] + UDP-N-acetyl-alpha-D-glucosamine = 3-O-(alpha-D-GlcNAc-(1-&gt;4)-beta-D-GlcA-(1-&gt;3)-beta-D-Gal-(1-&gt;3)-beta-D-Gal-(1-&gt;4)-beta-D-Xyl)-L-seryl-[protein] + UDP + H(+). Glycosyltransferase required for the biosynthesis of heparan-sulfate and responsible for the alternating addition of beta-1-4-linked glucuronic acid (GlcA) and alpha-1-4-linked N-acetylglucosamine (GlcNAc) units to nascent heparan sulfate chains. This is Exostosin-like 2 (Extl2) from Mus musculus (Mouse).